The chain runs to 282 residues: MAAERELDSSELPGSEALLDAVLRTLYDLGETEGETEQKRTRKKKEKKRDSETVADRAAEPLPLPASPGRDQRKSASSFFKKLREELQSAPAAPSEVPAATTAVSLFPLENDSKLVEVVEFHSRSEKRKPKSEEDKPAKNKTKVLEKDVVIQEFNLEKARLEVHRFGITGYGKGKERVLERERAIMLGAKPPKNTYVNYKVLQEQIKEKRTSMEEEKRAAQETDIFKRKKRKGRSQEDRRSKKLAPSILSSGRAAQVGKFRNGTLILSPADIKKINSSRVSK.

2 disordered regions span residues 27–98 and 121–143; these read YDLG…SEVP and FHSRSEKRKPKSEEDKPAKNKTK. A compositionally biased stretch (basic and acidic residues) spans 48–59; the sequence is KRDSETVADRAA. 2 positions are modified to phosphoserine: serine 67 and serine 75. Residues 89–98 show a composition bias toward low complexity; it reads SAPAAPSEVP. Residues 131-143 are compositionally biased toward basic and acidic residues; the sequence is KSEEDKPAKNKTK. Lysine 173 bears the N6-acetyllysine mark. The span at 208 to 226 shows a compositional bias: basic and acidic residues; sequence EKRTSMEEEKRAAQETDIF. The disordered stretch occupies residues 208-254; it reads EKRTSMEEEKRAAQETDIFKRKKRKGRSQEDRRSKKLAPSILSSGRA. Serine 268 is subject to Phosphoserine.

As to quaternary structure, part of the small subunit (SSU) processome, composed of more than 70 proteins and the RNA chaperone small nucleolar RNA (snoRNA) U3.

The protein resides in the chromosome. It is found in the nucleus. Its subcellular location is the nucleolus. Part of the small subunit (SSU) processome, first precursor of the small eukaryotic ribosomal subunit. During the assembly of the SSU processome in the nucleolus, many ribosome biogenesis factors, an RNA chaperone and ribosomal proteins associate with the nascent pre-rRNA and work in concert to generate RNA folding, modifications, rearrangements and cleavage as well as targeted degradation of pre-ribosomal RNA by the RNA exosome. Prevents helicase DHX37 to be recruited before post-A1 state. The chain is 40S small subunit processome assembly factor 1 from Rattus norvegicus (Rat).